Here is a 3498-residue protein sequence, read N- to C-terminus: MLRKTNLRMGTADVYKQNKNQEEDMLTTERLKKGYQMPLTQYELQSLVFNASENKLIRLEKAQKRSQSMIASVIHKKGEFHMNYDRERKIPKEQLPCFAPHNWKRILSDRVKFFSALARGTPLQQLSQRIPGFRRKELLFLEFSDYNISYDRAIWCVKLLCILGFNSSSKTQKKTLLDVATLELSQACNKTTIWLVTQLYKSFRNPIKRREATKTWNYLTGFMKYMFDDGVLDKQEFLNDLTEVFNQLFLQKNFKNPSVLSTFMKYYVYFVEDLSSSLVLARRSSTLLCQALGFLFEMAQDKRKIDAYYDSANKTFIKKEFENEDGEIYEFEDYDDFIDMLDEIPDVPYFDETDKTPEAQAEELIKQHEKRKAGSLKKSERRRRRGLSKNRPKKMPQNPSNEASLDHDKVQIKQEPMDYDEYGGQQSDNSMDYDSFSHQYDPSYEPLPFKPLHTDIPKKLTDDEEFKYMKIGKRSVTPERISGRYGSMTYPFWIQQGGVGIDPPKDEVLDFSNPTPTETVNTQPQIDFESSPSASPALSVDKENECEKKEDESKTKEKNKDKEKDKEKEKSVDEHTNDLDVPINPDDAEMADANDKTDASEKQKLVEEEPTGKENEDDTSSKTAKTSTSAEKSEAPSIVDSNDKIDKEPNASSTSNDETSKDDTVPMESDPPAATEKPKESTEITTEEPLEVDKAPEVDKSEKEHEDDIMIIESNKKADEDDCVVIAVVDPDQEQTPESEKKKDGEEERDKNKDTDVADNEPEKIYTDEELAEIKIRKEKEMKIATLASHIKEKMVSDKKWKEKTSHAGWRTLDQCSQFSEALHLLSSMVQYMACVTPESFVWNDLSVQQEERRHRILPQLCGSPLDYLPCELHKLPVMEGVEEVVDCLRLRHCEIVRRSQAAEDRWLPNAAFLQSFGRIIDTCVDVIGIMDNIDVEKPNAITNAGLRLFAFREKFEKQEALLKTMLMFKWCITEEREGSFRATYIAKLLRFGMDQNPENTIGGWQVMDLFFKFMSTEGPKHGSKMYQAHFDSTVAIMIEMMREKIFSITDILRELEKDSDLDYNAPLMERQRKQKIPKISKRHRKPETPDDTKLVHFTTEYTPKRLFMGKKMDLLERMIIILPQLDVDEDTDEYRLRRLLLFGLKPAANVYFRRARAIYKSITKEFTTRLYIEFDRSSKVTTAHKKINQNRLDDLLRQFRAQTYHDQHLILERIVYNFIDGIGGFLKKNCDDVPAPEVANIICEMYEFSMDITSIFDFFEMVNPYLKAVDDKIAHFRMDVLPDMYYTETAFIFVSFFMKHWQRFLLHPRACAIVNQCFVLIQDMIRADDHMITCWGRTVAIFVFHARKAIANAGLQNEEFLAEDSHFWRVFPNAQHVDLDVGYFNEDFAGVKLQLRGGTLRYDSYNDFKWLVSNMKPNLKKKPHLKRPNTRYSFVVRAFMEARQHGRNFDRINELANYCANITANDPPLSEYWIGAIKGLCFLSLDAPYPFKEMSQQIDISDCSTHYSLTTFITCLAGKSAFYIPRLLAELTKHVFPLMLRHDGRLTSQKTHDVKRKVASKTTESRTLSEAEPGVCLCLLIICGLCCVGDEPFGLSVHYRGIEKKKKRFNNTADERIMHLFHWFEMDHAMFRTLGHISQLLEALQSRCRDANLVLPKNFPIKNPPKHQQELHREKAPYRPQYLFNIAKTVQFVICEQDWVTLRMFRFFQTRKMEAFNQDKLKQNCLGQQILRMALRRRTERENVHKLFEAHKISKKATVDKVLSFMNLWNFRATLFDLMLMIKEISPDGNSRHAQQGAIAADALMSEIGKCCRDMFLSAYKTKIKMPIAKTLTDFRLSDINKFWLIAPLVRMCPKPINIPPQYANTTVGTVAAKFLREAALLMDTPPTTPKERLLQCSWAMSKVPFINMILTCLQCEKMQQSKDVFLQSLYTQLQRETLRDHHRRSNWTNRREHRDCTIFRITLIGYIYKEILKATHVETWGLLIFQLMFHGIINPVREKLIYETCFDMLHHMVLWTLVDGDSMNQHDRYGSIRVRWPQYAGLMKKIRKEMQERFTDQTRNSLHRFLPIGKMQMSTISYKKYQKRPKVNQKMSKKFLAGEGLKNGKYSFLPEEKAKTNAFEHTDHLGDLIVKGGWKFRMFQTTRLDKVAKNVQNVLRSNMHHTHVLEFNRPQLLMSDNMFDDIFLAPPDIEITKIIEQPVPVIDEEEAKKRAEEEKEAAEKKEESKNAEDEKNKNNAENKKDTKEGEKGKSKDKEKDGEKEKCKDASKKDDVTSEKNELEKRASDAAAATNAPETNKDMDTSTPKPAPVTRSPATRGRGGGRKRNSGARGGGPRAKRANSRADTAQAAAATTQWNAPIANTSNPAAGGNFHAAMRGNQPPMSNGSSDETKVHIRNLLNRKKEEKRNSLADASAAAAAANSNAMGNTSSMPPSGPPMPMGSSMQSAGATQQLQGMQKHQMGGSMSGMNQNMGGMNQSMSHQAPPPYSSTNEMNRPLMNQYGGPHFAAPNPGPLNRSSGPVSSETRQQIMEQQMREKLAAHHQLVEQQKQRDAREREAREREAREHQERMQREAYMKEQQLLERKRAIEENNRIMEEQQREREMEAARKEAARRAAEEAYAAEQQRLELLRRQEEERLRKEAEERMRIQRENEERVRQEQMRLEAEERERIRRAEEERIQKELEDKVRREKEEAARQEKERQEQEARMREAREAELSRQRMEQQRRSQQNPYMNQQGQYSQQPPPSYQQSSYPNNYQPGQQGNQPPNYQQPSHQSMQQGHQAGYQQTSNQMQMNMQQQQNRQQGGPQQSFSGPGGINQPSQPGYSGYNQQGGQGQQGQMQQQRNPFGNQQDMQQPGAAKLMHAKPNEAHAQQYQHTQNQLSLAQKEKEKQYFQAKNLQASQANAQQQQQRFGDVVAGNVAGYGRPYGQQQLGASDQMGTSQLPGASTSRMNQGSSNPQGGMQSYQQQQPVLGQPGPIQTGQSTQQQIPAQSQQQYNSGRPQMHTTPTKNDMSARAPSGAMGQIANRMGHGTNPQGYGSTGQNVPGGYQQGQQQSGQGSYPQAQQQQPNQYSGSNQQVGQQAQQQQQQPLNQNVSQSQSAAQFGRPSQDSAYQQSGYNQTGNQSYQRPDQQQQGAQQNQWSGSNQAQNQLRSQQQAQQPLQQPQQSQQFQQPAQQAKNPMAQSAQYGGFGGQQQGYDQQQQGQIAPQQAQNPQASQSYGQQQTQQNRYGMGSSGYTANSGGSSNILNQSMEESGLNQGFSGASSNASSQQGGSSQMQQSGYGMPGNQMQMQQNQKQQVQRGMPTGMGQTNMGQSGMGQSGMGQTGMSRSGLGGGIGQQGQQSQQPQQPQVSQQQNQRGMNPGAQLPPYSTGQQQHQPQQSQISQQQQQQDQYRRMQAAQMQQQPTAQGQQNRMGMPSQQQSGAAYSNQMQFQGVRQGQQGMGGMGGSGQQQPQTQPHGSNQYYQQQQDQRMQQQPQQPGQQQQHGYGMGQYPNQQPPNQY.

6 disordered regions span residues 365 to 456 (IKQH…HTDI), 497 to 764 (GGVG…EPEK), 2209 to 2576 (AKKR…AYMK), 2589 to 2620 (ENNRIMEEQQREREMEAARKEAARRAAEEAYA), 2637 to 2889 (LRKE…KEKQ), and 2917 to 3498 (NVAG…PNQY). A compositionally biased stretch (basic residues) spans 368 to 394 (HEKRKAGSLKKSERRRRRGLSKNRPKK). Residues 404-416 (SLDHDKVQIKQEP) show a composition bias toward basic and acidic residues. 2 stretches are compositionally biased toward polar residues: residues 424–440 (GQQSDNSMDYDSFSHQY) and 512–536 (SNPTPTETVNTQPQIDFESSPSASP). Positions 539 to 570 (SVDKENECEKKEDESKTKEKNKDKEKDKEKEK) form a coiled coil. Composition is skewed to basic and acidic residues over residues 540-578 (VDKENECEKKEDESKTKEKNKDKEKDKEKEKSVDEHTND) and 593-614 (ANDKTDASEKQKLVEEEPTGKE). A compositionally biased stretch (low complexity) spans 621-630 (SKTAKTSTSA). Basic and acidic residues-rich tracts occupy residues 691 to 719 (EVDKAPEVDKSEKEHEDDIMIIESNKKAD), 738 to 764 (ESEKKKDGEEERDKNKDTDVADNEPEK), and 2209 to 2285 (AKKR…KRAS). Residues 2142 to 3498 (QTTRLDKVAK…YPNQQPPNQY (1357 aa)) are required for nuclear localization. The stretch at 2203–2290 (VIDEEEAKKR…EKRASDAAAA (88 aa)) forms a coiled coil. 2 stretches are compositionally biased toward low complexity: residues 2342–2360 (RADTAQAAAATTQWNAPIA) and 2409–2431 (LADASAAAAAANSNAMGNTSSMP). Residues 2395–2420 (RNLLNRKKEEKRNSLADASAAAAAAN) are a coiled coil. Residues 2444-2456 (QSAGATQQLQGMQ) show a composition bias toward polar residues. A compositionally biased stretch (low complexity) spans 2459 to 2479 (QMGGSMSGMNQNMGGMNQSMS). The segment covering 2514-2530 (NRSSGPVSSETRQQIME) has biased composition (polar residues). Composition is skewed to basic and acidic residues over residues 2547–2576 (QKQRDAREREAREREAREHQERMQREAYMK), 2589–2616 (ENNRIMEEQQREREMEAARKEAARRAAE), and 2637–2724 (LRKE…EQQR). Over residues 2725-2770 (RSQQNPYMNQQGQYSQQPPPSYQQSSYPNNYQPGQQGNQPPNYQQP) the composition is skewed to low complexity. Residues 2771-2783 (SHQSMQQGHQAGY) are compositionally biased toward polar residues. The segment covering 2784-2810 (QQTSNQMQMNMQQQQNRQQGGPQQSFS) has biased composition (low complexity). 4 stretches are compositionally biased toward polar residues: residues 2816-2827 (NQPSQPGYSGYN), 2842-2852 (RNPFGNQQDMQ), 2868-2881 (HAQQYQHTQNQLSL), and 2926-2956 (GQQQLGASDQMGTSQLPGASTSRMNQGSSNP). A compositionally biased stretch (low complexity) spans 2957-2993 (QGGMQSYQQQQPVLGQPGPIQTGQSTQQQIPAQSQQQ). Positions 2994–3009 (YNSGRPQMHTTPTKND) are enriched in polar residues. Residues 3039-3100 (GQNVPGGYQQ…NVSQSQSAAQ (62 aa)) are compositionally biased toward low complexity. The span at 3103-3127 (RPSQDSAYQQSGYNQTGNQSYQRPD) shows a compositional bias: polar residues. 2 stretches are compositionally biased toward low complexity: residues 3128–3184 (QQQQ…SAQY) and 3192–3223 (QGYDQQQQGQIAPQQAQNPQASQSYGQQQTQQ). The span at 3231–3253 (SGYTANSGGSSNILNQSMEESGL) shows a compositional bias: polar residues. Positions 3254–3311 (NQGFSGASSNASSQQGGSSQMQQSGYGMPGNQMQMQQNQKQQVQRGMPTGMGQTNMGQ) are enriched in low complexity. The span at 3312-3321 (SGMGQSGMGQ) shows a compositional bias: gly residues. Low complexity-rich tracts occupy residues 3336–3356 (QGQQSQQPQQPQVSQQQNQRG) and 3370–3408 (QQQHQPQQSQISQQQQQQDQYRRMQAAQMQQQPTAQGQQ). Residues 3414-3425 (PSQQQSGAAYSN) are compositionally biased toward polar residues. Residues 3426–3436 (QMQFQGVRQGQ) are compositionally biased toward low complexity. Gly residues predominate over residues 3437–3446 (QGMGGMGGSG). Residues 3447–3498 (QQQPQTQPHGSNQYYQQQQDQRMQQQPQQPGQQQQHGYGMGQYPNQQPPNQY) show a composition bias toward low complexity.

The protein belongs to the Mediator complex subunit 12 family. In terms of assembly, component of the Mediator complex. Ubiquitously expressed.

It is found in the nucleus. Component of the Mediator complex, a coactivator involved in regulated gene transcription of nearly all RNA polymerase II-dependent genes. Mediator functions as a bridge to convey information from gene-specific regulatory proteins to the basal RNA polymerase II transcription machinery. Mediator is recruited to promoters by direct interactions with regulatory proteins and serves as a scaffold for the assembly of a functional preinitiation complex with RNA polymerase II and the general transcription factors. Functions downstream of let-60 during vulval induction. Required for asymmetric division of T-cells and for hypodermal development. In Caenorhabditis elegans, this protein is Mediator of RNA polymerase II transcription subunit 12 (dpy-22).